The primary structure comprises 429 residues: Uracil permease (429 aa).

Topologically, residues 1–13 (MTRRAIGVSERPP) are cytoplasmic. A helical transmembrane segment spans residues 14–37 (LLQTIPLSLQHLFAMFGATVLVPV). Over 38-41 (LFHI) the chain is Periplasmic. A helical transmembrane segment spans residues 42–61 (NPATVLLFNGIGTLLYLFIC). At 62-64 (KGK) the chain is on the cytoplasmic side. Residues 65 to 81 (IPAYLGSSFAFISPVLL) traverse the membrane as a discontinuously helical segment. F73 is a binding site for uracil. Residues 82–89 (LLPLGYEV) lie on the Periplasmic side of the membrane. Residues 90–110 (ALGGFIMCGVLFCLVSFIVKK) form a helical membrane-spanning segment. The Cytoplasmic segment spans residues 111 to 122 (AGTGWLDVLFPP). Residues 123 to 144 (AAMGAIVAVIGLELAGVAAGMA) form a helical membrane-spanning segment. Residues 145 to 155 (GLLPAEGQTPD) are Periplasmic-facing. A helical transmembrane segment spans residues 156-171 (SKTIIISITTLAVTVL). The Cytoplasmic portion of the chain corresponds to 172 to 178 (GSVLFRG). A helical membrane pass occupies residues 179–199 (FLAIIPILIGVLVGYALSFAM). The Periplasmic portion of the chain corresponds to 200–224 (GIVDTTPIINAHWFALPTLYTPRFE). A helical membrane pass occupies residues 225–248 (WFAILTILPAALVVIAEHVGHLVV). Residue E241 participates in uracil binding. The Cytoplasmic segment spans residues 249 to 261 (TANIVKKDLLRDP). A helical transmembrane segment spans residues 262–281 (GLHRSMFANGLSTVISGFFG). Residues 282–298 (STPNTTYGENIGVMAIT) form a discontinuously helical membrane-spanning segment. Uracil-binding residues include G289 and E290. Topologically, residues 299 to 301 (RVY) are cytoplasmic. Residues 302-319 (STWVIGGAAIFAILLSCV) traverse the membrane as a helical segment. Residues 320–332 (GKLAAAIQMIPLP) are Periplasmic-facing. A helical membrane pass occupies residues 333–354 (VMGGVSLLLYGVIGASGIRVLI). The Cytoplasmic portion of the chain corresponds to 355 to 365 (ESKVDYNKAQN). An intramembrane region (discontinuously helical) is located at residues 366–401 (LILTSVILIIGVSGAKVNIGAAELKGMALATIVGIG). Residues 402–429 (LSLIFKLISVLRPEEVVLDAEDADITDK) are Cytoplasmic-facing.

This sequence belongs to the nucleobase:cation symporter-2 (NCS2) (TC 2.A.40) family.

Its subcellular location is the cell inner membrane. It carries out the reaction uracil(in) + H(+)(in) = uracil(out) + H(+)(out). Transport of uracil in the cell. The chain is Uracil permease (uraA) from Escherichia coli O157:H7.